A 545-amino-acid polypeptide reads, in one-letter code: CTP synthase (545 aa).

The tract at residues 1–265 (MNGIKHIFIT…DKFVIKHLDL (265 aa)) is amidoligase domain. Ser-15 contacts CTP. Ser-15 contributes to the UTP binding site. ATP contacts are provided by residues 16–21 (SIGKGL) and Asp-73. The Mg(2+) site is built by Asp-73 and Glu-141. CTP-binding positions include 148-150 (DIE), 188-193 (KTKPTQ), and Lys-224. UTP is bound by residues 188 to 193 (KTKPTQ) and Lys-224. Positions 290–534 (EIAIIGKYTG…VAAALARKEI (245 aa)) constitute a Glutamine amidotransferase type-1 domain. Gly-349 contributes to the L-glutamine binding site. Residue Cys-376 is the Nucleophile; for glutamine hydrolysis of the active site. L-glutamine-binding positions include 377–380 (LGMQ), Glu-400, and Arg-460. Residues His-507 and Glu-509 contribute to the active site.

It belongs to the CTP synthase family. As to quaternary structure, homotetramer.

The catalysed reaction is UTP + L-glutamine + ATP + H2O = CTP + L-glutamate + ADP + phosphate + 2 H(+). It catalyses the reaction L-glutamine + H2O = L-glutamate + NH4(+). The enzyme catalyses UTP + NH4(+) + ATP = CTP + ADP + phosphate + 2 H(+). It functions in the pathway pyrimidine metabolism; CTP biosynthesis via de novo pathway; CTP from UDP: step 2/2. With respect to regulation, allosterically activated by GTP, when glutamine is the substrate; GTP has no effect on the reaction when ammonia is the substrate. The allosteric effector GTP functions by stabilizing the protein conformation that binds the tetrahedral intermediate(s) formed during glutamine hydrolysis. Inhibited by the product CTP, via allosteric rather than competitive inhibition. Catalyzes the ATP-dependent amination of UTP to CTP with either L-glutamine or ammonia as the source of nitrogen. Regulates intracellular CTP levels through interactions with the four ribonucleotide triphosphates. This Tropheryma whipplei (strain TW08/27) (Whipple's bacillus) protein is CTP synthase.